Consider the following 380-residue polypeptide: MSDSPIQYRLIKKEKHTGARLGEIITPHGTFPTPMFMPVGTQATVKTQSPEELKQMGSGIILANTYHLWLRPGDELIARAGGLHKFMNWDQPILTDSGGFQVYSLADSRNITEEGVTFKNHLNGSKMFLSPEKAISIQNNLGSDIMMSFDECPQFYQPYDYVKKSIERTSRWAERGLKAHSRPHDQGLFGIVQGAGFEDLRRQSAQDLVSMDFPGYSIGGLAVGESHEEMNAVLDFTTPLLPENKPRYLMGVGAPDSLIDGVIRGVDMFDCVLPTRIARNGTCMTSEGRLVVKNAQFEEDFTPLDHNCDCYTCTNYTRAYIRHLLKADETFGLRLTSYHNLYFLVNLMKKVRQAIMDDNLLEFREDFMERYGYNRSNRNF.

Residue Asp-96 is the Proton acceptor of the active site. Substrate is bound by residues 96-100, Asp-150, Gln-193, and Gly-220; that span reads DSGGF. The segment at 251–257 is RNA binding; the sequence is GVGAPDS. Catalysis depends on Asp-270, which acts as the Nucleophile. The interval 275 to 279 is RNA binding; important for wobble base 34 recognition; the sequence is TRIAR. Positions 308, 310, 313, and 339 each coordinate Zn(2+).

It belongs to the queuine tRNA-ribosyltransferase family. As to quaternary structure, homodimer. Within each dimer, one monomer is responsible for RNA recognition and catalysis, while the other monomer binds to the replacement base PreQ1. The cofactor is Zn(2+).

It catalyses the reaction 7-aminomethyl-7-carbaguanine + guanosine(34) in tRNA = 7-aminomethyl-7-carbaguanosine(34) in tRNA + guanine. Its pathway is tRNA modification; tRNA-queuosine biosynthesis. In terms of biological role, catalyzes the base-exchange of a guanine (G) residue with the queuine precursor 7-aminomethyl-7-deazaguanine (PreQ1) at position 34 (anticodon wobble position) in tRNAs with GU(N) anticodons (tRNA-Asp, -Asn, -His and -Tyr). Catalysis occurs through a double-displacement mechanism. The nucleophile active site attacks the C1' of nucleotide 34 to detach the guanine base from the RNA, forming a covalent enzyme-RNA intermediate. The proton acceptor active site deprotonates the incoming PreQ1, allowing a nucleophilic attack on the C1' of the ribose to form the product. After dissociation, two additional enzymatic reactions on the tRNA convert PreQ1 to queuine (Q), resulting in the hypermodified nucleoside queuosine (7-(((4,5-cis-dihydroxy-2-cyclopenten-1-yl)amino)methyl)-7-deazaguanosine). The protein is Queuine tRNA-ribosyltransferase of Streptococcus gordonii (strain Challis / ATCC 35105 / BCRC 15272 / CH1 / DL1 / V288).